A 104-amino-acid chain; its full sequence is Guanidinium exporter (104 aa).

Over 1–3 (MSW) the chain is Cytoplasmic. Residues 4 to 26 (IILFVAGLLEIVWAVGLKYTHGF) traverse the membrane as a helical segment. At 27 to 32 (TRLTPS) the chain is on the periplasmic side. A helical transmembrane segment spans residues 33 to 50 (IITISAMIVSMGMLSYAM). At 51–54 (KGLP) the chain is on the cytoplasmic side. Residues 55–77 (AGTAYAIWTGIGAVGTAIFGIIV) traverse the membrane as a helical segment. The Periplasmic segment spans residues 78–83 (FGESAN). Residues 84 to 103 (IYRLLSLAMIVFGIIGLKLA) form a helical membrane-spanning segment. Position 104 (serine 104) is a topological domain, cytoplasmic.

Belongs to the drug/metabolite transporter (DMT) superfamily. Small multidrug resistance (SMR) (TC 2.A.7.1) family. Gdx/SugE subfamily.

It localises to the cell inner membrane. Functionally, guanidinium ion exporter. Couples guanidinium export to the proton motive force, exchanging one guanidinium ion for two protons. In Proteus vulgaris, this protein is Guanidinium exporter.